The chain runs to 356 residues: Tricetin 3',4',5'-O-trimethyltransferase (356 aa).

Residue 123–129 (MNQDKVL) coordinates substrate. The tract at residues 155–173 (AFEYHGTDPRFNRVFNEGM) is substrate binding. Residues glycine 201, aspartate 224, aspartate 244, methionine 245, and lysine 258 each coordinate S-adenosyl-L-methionine. The Proton acceptor role is filled by histidine 262.

This sequence belongs to the class I-like SAM-binding methyltransferase superfamily. Cation-independent O-methyltransferase family. COMT subfamily. In terms of assembly, homodimer. The monomer is fully active and dimerization is not required for sequential methylation. As to expression, expressed in roots, stems and leaves.

It catalyses the reaction tricetin + 3 S-adenosyl-L-methionine = 3',4',5'-O-trimethyltricetin + 3 S-adenosyl-L-homocysteine + 3 H(+). In terms of biological role, flavonoid B-ring-specific O-methyltransferase with a preference for flavones &gt; dihydroflavones &gt; flavonols that possess at least two B-ring hydroxyl groups. Active with tricetin, 5-hydroxyferulic acid, luteolin, quercitin, eriodictyol, quercetagetin, taxifolin, gossypetin and myricetin. No activity with naringenin, apigenin, kaempferol, 7,8-dihydroxy- or 5,7,8-trihydroxy flavones, chlorogenic acid, gallic acid or daphnetin. Catalyzes the sequential O-methylation of tricetin via 3'-O-methyltricetin, 3',5'-O-methyltricetin to 3',4',5'-O-trimethyltricetin. May also be involved in S lignin biosynthesis. The polypeptide is Tricetin 3',4',5'-O-trimethyltransferase (OMT2) (Triticum aestivum (Wheat)).